The primary structure comprises 411 residues: Na(+)-translocating NADH-quinone reductase subunit F (411 aa).

The chain crosses the membrane as a helical span at residues 5–25 (VILALGIAAFTVIVLVLVAII). The 2Fe-2S ferredoxin-type domain maps to 36-130 (GDITIDINDD…NMEVELPEEI (95 aa)). Residues Cys73, Cys79, Cys82, and Cys114 each contribute to the [2Fe-2S] cluster site. The region spanning 133–273 (VKKWECTVIS…SGPFGEFFAK (141 aa)) is the FAD-binding FR-type domain. The catalytic stretch occupies residues 276–393 (DAEMVFIGGG…PVMNAAVIKM (118 aa)).

Belongs to the NqrF family. In terms of assembly, composed of six subunits; NqrA, NqrB, NqrC, NqrD, NqrE and NqrF. The cofactor is [2Fe-2S] cluster. Requires FAD as cofactor.

The protein resides in the cell inner membrane. The enzyme catalyses a ubiquinone + n Na(+)(in) + NADH + H(+) = a ubiquinol + n Na(+)(out) + NAD(+). NQR complex catalyzes the reduction of ubiquinone-1 to ubiquinol by two successive reactions, coupled with the transport of Na(+) ions from the cytoplasm to the periplasm. The first step is catalyzed by NqrF, which accepts electrons from NADH and reduces ubiquinone-1 to ubisemiquinone by a one-electron transfer pathway. This is Na(+)-translocating NADH-quinone reductase subunit F from Haemophilus influenzae (strain ATCC 51907 / DSM 11121 / KW20 / Rd).